A 366-amino-acid polypeptide reads, in one-letter code: 3-dehydroquinate synthase (366 aa).

NAD(+) is bound by residues 71-76, 105-109, 129-130, lysine 142, lysine 151, and 169-172; these read DGEKYK, GVIGD, TT, and TLQT. Residues glutamate 184, histidine 247, and histidine 264 each contribute to the Zn(2+) site.

Belongs to the sugar phosphate cyclases superfamily. Dehydroquinate synthase family. The cofactor is Co(2+). Zn(2+) is required as a cofactor. It depends on NAD(+) as a cofactor.

The protein resides in the cytoplasm. The enzyme catalyses 7-phospho-2-dehydro-3-deoxy-D-arabino-heptonate = 3-dehydroquinate + phosphate. Its pathway is metabolic intermediate biosynthesis; chorismate biosynthesis; chorismate from D-erythrose 4-phosphate and phosphoenolpyruvate: step 2/7. Its function is as follows. Catalyzes the conversion of 3-deoxy-D-arabino-heptulosonate 7-phosphate (DAHP) to dehydroquinate (DHQ). This chain is 3-dehydroquinate synthase, found in Actinobacillus pleuropneumoniae serotype 5b (strain L20).